A 438-amino-acid chain; its full sequence is Serine--tRNA ligase (438 aa).

Residue 243–245 (TAE) participates in L-serine binding. Position 274–276 (274–276 (RSE)) interacts with ATP. Position 297 (Glu297) interacts with L-serine. 361–364 (EISS) contributes to the ATP binding site. An L-serine-binding site is contributed by Ser396.

It belongs to the class-II aminoacyl-tRNA synthetase family. Type-1 seryl-tRNA synthetase subfamily. In terms of assembly, homodimer. The tRNA molecule binds across the dimer.

It localises to the cytoplasm. The catalysed reaction is tRNA(Ser) + L-serine + ATP = L-seryl-tRNA(Ser) + AMP + diphosphate + H(+). It carries out the reaction tRNA(Sec) + L-serine + ATP = L-seryl-tRNA(Sec) + AMP + diphosphate + H(+). Its pathway is aminoacyl-tRNA biosynthesis; selenocysteinyl-tRNA(Sec) biosynthesis; L-seryl-tRNA(Sec) from L-serine and tRNA(Sec): step 1/1. Catalyzes the attachment of serine to tRNA(Ser). Is also able to aminoacylate tRNA(Sec) with serine, to form the misacylated tRNA L-seryl-tRNA(Sec), which will be further converted into selenocysteinyl-tRNA(Sec). The protein is Serine--tRNA ligase of Ralstonia pickettii (strain 12J).